A 253-amino-acid polypeptide reads, in one-letter code: Glucosamine-6-phosphate deaminase (253 aa).

Aspartate 65 (proton acceptor; for enolization step) is an active-site residue. Asparagine 133 acts as the For ring-opening step in catalysis. Histidine 135 serves as the catalytic Proton acceptor; for ring-opening step. Catalysis depends on glutamate 140, which acts as the For ring-opening step.

The protein belongs to the glucosamine/galactosamine-6-phosphate isomerase family. NagB subfamily.

The catalysed reaction is alpha-D-glucosamine 6-phosphate + H2O = beta-D-fructose 6-phosphate + NH4(+). The protein operates within amino-sugar metabolism; N-acetylneuraminate degradation; D-fructose 6-phosphate from N-acetylneuraminate: step 5/5. Catalyzes the reversible isomerization-deamination of glucosamine 6-phosphate (GlcN6P) to form fructose 6-phosphate (Fru6P) and ammonium ion. The protein is Glucosamine-6-phosphate deaminase of Corynebacterium glutamicum (strain R).